Consider the following 107-residue polypeptide: Putidaredoxin (107 aa).

The region spanning 2-106 (SKVVYVSHDG…GIVVDVPDRQ (105 aa)) is the 2Fe-2S ferredoxin-type domain. 4 residues coordinate [2Fe-2S] cluster: Cys40, Cys46, Cys49, and Cys87.

It belongs to the adrenodoxin/putidaredoxin family. As to quaternary structure, monomer. [2Fe-2S] cluster serves as cofactor.

Its function is as follows. The oxidation of camphor by cytochrome P450-CAM requires the participation of a flavoprotein, putidaredoxin reductase, and an iron-sulfur protein, putidaredoxin, to mediate the transfer of electrons from NADH to P450 for oxygen activation. The chain is Putidaredoxin (camB) from Pseudomonas putida (Arthrobacter siderocapsulatus).